The primary structure comprises 79 residues: Conotoxin ArMSGL-021 (79 aa).

The N-terminal stretch at 1–20 is a signal peptide; it reads MSRLGIMVLTLLLLVFIVTS. Positions 21–44 are excised as a propeptide; sequence HQDAGEKQATHRGAINFRWRRSLI. 3 disulfide bridges follow: Cys52-Cys64, Cys56-Cys73, and Cys63-Cys77. A Leucine amide modification is found at Leu78.

Belongs to the conotoxin O3 superfamily. As to expression, expressed by the venom duct.

It is found in the secreted. The protein is Conotoxin ArMSGL-021 of Conus arenatus (Sand-dusted cone).